The following is a 235-amino-acid chain: Large ribosomal subunit protein uL1 (235 aa).

Belongs to the universal ribosomal protein uL1 family. As to quaternary structure, part of the 50S ribosomal subunit.

Functionally, binds directly to 23S rRNA. The L1 stalk is quite mobile in the ribosome, and is involved in E site tRNA release. Protein L1 is also a translational repressor protein, it controls the translation of the L11 operon by binding to its mRNA. The chain is Large ribosomal subunit protein uL1 from Renibacterium salmoninarum (strain ATCC 33209 / DSM 20767 / JCM 11484 / NBRC 15589 / NCIMB 2235).